The following is a 256-amino-acid chain: Necrosis-inducing protein NPP1 (256 aa).

Positions 111-121 match the Conserved undecapeptide motif motif; it reads AIMYAWYFPKG. The short motif at 133–139 is the Conserved heptapeptide motif element; sequence GHRHEWE.

Belongs to the Necrosis inducing protein (NPP1) family.

The protein resides in the secreted. Functionally, secreted effector that acts as a pathogen-associated molecular pattern (PAMP) recognized by the plant immune system. This Phytophthora cinnamomi (Cinnamon fungus) protein is Necrosis-inducing protein NPP1.